A 591-amino-acid chain; its full sequence is PDZ and LIM domain protein 5 (591 aa).

At serine 2 the chain carries N-acetylserine. The residue at position 2 (serine 2) is a Phosphoserine. The PDZ domain maps to 2-85; it reads SNYNVSLVGP…SLNMTLQRAS (84 aa). An N6-acetyllysine; alternate modification is found at lysine 89. Lysine 89 carries the N6-succinyllysine; alternate modification. A Glycyl lysine isopeptide (Lys-Gly) (interchain with G-Cter in SUMO2); alternate cross-link involves residue lysine 89. Residues serine 111, serine 134, and serine 137 each carry the phosphoserine modification. Disordered stretches follow at residues 125–240 and 255–334; these read YNKV…GPPR and THSD…SNRP. Residues 134-143 show a composition bias toward polar residues; that stretch reads SVSSPKVTSI. The span at 144–161 shows a compositional bias: low complexity; sequence PSPSSAFTPAHAATSSHA. The segment covering 162 to 174 has biased composition (pro residues); that stretch reads SPPPVAAVTPPPL. 2 stretches are compositionally biased toward polar residues: residues 183-195 and 207-217; these read ANPS…SPPN and PTVTSVCSESA. 2 positions are modified to phosphoserine: serine 228 and serine 260. Basic and acidic residues-rich tracts occupy residues 258–273 and 293–304; these read DASK…DWRP and EHLKESENDNAK. Residues 310-329 show a composition bias toward low complexity; the sequence is PEPSQQSASPLSAAESLESP. 2 positions are modified to phosphoserine: serine 313 and serine 318. Lysine 346 carries the post-translational modification N6-acetyllysine. Positions 348-398 are disordered; the sequence is VGSTSVKSPSWQRPNQAAPSTGRISNSASSSGTGAPMKPAVGPPQPSDQDT. Residues 349–380 are compositionally biased toward polar residues; that stretch reads GSTSVKSPSWQRPNQAAPSTGRISNSASSSGT. Phosphoserine is present on residues serine 355 and serine 357. 3 LIM zinc-binding domains span residues 413–472, 472–531, and 531–591; these read PMCA…FFAP, PECG…LFGT, and TICR…SVNF.

Interacts with various PKC isoforms through the LIM domains. Interacts with actin and alpha-actinin through the PDZ domain. Interacts (via LIM domains) with SIPA1L1/SPAR; this interaction may occur preferentially with isoform 1. In terms of tissue distribution, detected in brain, in neurons, including in hippocampal neurons, and glial cells (at protein level). Detected in heart and skeletal muscle.

The protein resides in the postsynaptic density. The protein localises to the presynapse. Its subcellular location is the postsynapse. It is found in the cytoplasm. It localises to the cytosol. Its function is as follows. May play an important role in the heart development by scaffolding PKC to the Z-disk region. May play a role in the regulation of cardiomyocyte expansion. Isoforms lacking the LIM domains may negatively modulate the scaffolding activity of isoform 1. Overexpression promotes the development of heart hypertrophy. Contributes to the regulation of dendritic spine morphogenesis in neurons. May be required to restrain postsynaptic growth of excitatory synapses. Isoform 1, but not isoform 2, expression favors spine thinning and elongation. This Rattus norvegicus (Rat) protein is PDZ and LIM domain protein 5 (Pdlim5).